The sequence spans 368 residues: Chaperone protein DnaJ (368 aa).

In terms of domain architecture, J spans 5-70 (DYYQVLGVPR…KKRKLYDTHG (66 aa)). Residues 124-201 (GVERQIQIPT…CNGAGRVEDH (78 aa)) form a CR-type zinc finger. The Zn(2+) site is built by Cys-137, Cys-140, Cys-153, Cys-156, Cys-175, Cys-178, Cys-189, and Cys-192. CXXCXGXG motif repeat units lie at residues 137–144 (CTHCHGSG), 153–160 (CGTCRGSG), 175–182 (CPHCGGRG), and 189–196 (CKVCNGAG).

Belongs to the DnaJ family. Homodimer. Zn(2+) is required as a cofactor.

It is found in the cytoplasm. In terms of biological role, participates actively in the response to hyperosmotic and heat shock by preventing the aggregation of stress-denatured proteins and by disaggregating proteins, also in an autonomous, DnaK-independent fashion. Unfolded proteins bind initially to DnaJ; upon interaction with the DnaJ-bound protein, DnaK hydrolyzes its bound ATP, resulting in the formation of a stable complex. GrpE releases ADP from DnaK; ATP binding to DnaK triggers the release of the substrate protein, thus completing the reaction cycle. Several rounds of ATP-dependent interactions between DnaJ, DnaK and GrpE are required for fully efficient folding. Also involved, together with DnaK and GrpE, in the DNA replication of plasmids through activation of initiation proteins. The sequence is that of Chaperone protein DnaJ from Xylella fastidiosa (strain M23).